We begin with the raw amino-acid sequence, 454 residues long: Neuronal acetylcholine receptor subunit alpha-5 (454 aa).

Residues Met1–Pro26 are disordered. A signal peptide spans Met1–Val29. Positions Pro10 to Gly22 are enriched in low complexity. The Extracellular segment spans residues Ala30 to Thr240. N-linked (GlcNAc...) asparagine glycosylation is found at Asn55, Asn169, and Asn215. A disulfide bond links Cys156 and Cys170. Cys220 and Cys221 form a disulfide bridge. 3 helical membrane-spanning segments follow: residues Leu241–Pro261, Leu270–Pro290, and Leu303–Ile323. Residues His324–Met416 lie on the Cytoplasmic side of the membrane. Residues Phe417–Ile437 traverse the membrane as a helical segment. At His438–Thr454 the chain is on the extracellular side.

This sequence belongs to the ligand-gated ion channel (TC 1.A.9) family. Acetylcholine receptor (TC 1.A.9.1) subfamily. Alpha-5/CHRNA5 sub-subfamily. As to quaternary structure, neuronal AChR that forms heteropentamers composed of two different type of subunits: alpha and non-alpha (beta). CHRNA5/alpha-5 subunit is only able to form functional nAChRs when co-assembled with another alpha subunit, can be combined to CHRNA4/alpha-4 or CHRNA3/alpha-3 and CHRNB4/beta-4 or CHRNB2/beta-2 to give rise to functional receptors. Interacts with LYPD6.

Its subcellular location is the synaptic cell membrane. The protein localises to the cell membrane. The catalysed reaction is Ca(2+)(in) = Ca(2+)(out). It carries out the reaction K(+)(in) = K(+)(out). It catalyses the reaction Na(+)(in) = Na(+)(out). Its activity is regulated as follows. Activated by a myriad of ligands such as acetylcholine, cytisine, nicotine, choline and epibatidine. Functionally, component of neuronal acetylcholine receptors (nAChRs) that function as pentameric, ligand-gated cation channels with high calcium permeability among other activities. nAChRs are excitatory neurotrasnmitter receptors formed by a collection of nAChR subunits known to mediate synaptic transmission in the nervous system and the neuromuscular junction. Each nAchR subunit confers differential attributes to channel properties, including activation, deactivation and desensitization kinetics, pH sensitivity, cation permeability, and binding to allosteric modulators. Has an accessory rather than functional role and is only able to form functional nAChRs when co-assembled with another beta subunit. Participates in pentameric assemblies along with CHRNA3, CHRNA4, CHRNB2 and CHRNB4. Increases receptor sensitivity to acetylcholine and nicotine when associated with CHRNA4 and CHRNB2. Plays a role in nicotine addiction. This chain is Neuronal acetylcholine receptor subunit alpha-5 (CHRNA5), found in Gallus gallus (Chicken).